The sequence spans 624 residues: Chaperone protein HtpG (624 aa).

Residues 1–336 (MKGQETRGFQ…SNDLPLNVSR (336 aa)) form an a; substrate-binding region. Positions 337 to 552 (EILQDSTVTR…ADEMSTQMAK (216 aa)) are b. The interval 553–624 (LFAAAGQSVP…IRRMNQLLVS (72 aa)) is c.

Belongs to the heat shock protein 90 family. In terms of assembly, homodimer.

It is found in the cytoplasm. In terms of biological role, molecular chaperone. Has ATPase activity. This chain is Chaperone protein HtpG, found in Salmonella paratyphi A (strain ATCC 9150 / SARB42).